The sequence spans 793 residues: Probable phosphoketolase 2 (793 aa).

Belongs to the XFP family. Thiamine diphosphate serves as cofactor.

The sequence is that of Probable phosphoketolase 2 from Nostoc sp. (strain PCC 7120 / SAG 25.82 / UTEX 2576).